The sequence spans 397 residues: 2-aminoadipate transaminase (397 aa).

Glycine 40 is a substrate binding site. Residues tyrosine 70, 100-101, asparagine 174, 202-205, 235-237, and arginine 245 each bind pyridoxal 5'-phosphate; these read SQ, DDAY, and SFS. Residue asparagine 174 coordinates substrate. N6-(pyridoxal phosphate)lysine is present on lysine 263. Position 368 (arginine 368) interacts with substrate.

Belongs to the class-I pyridoxal-phosphate-dependent aminotransferase family. Homodimer. Pyridoxal 5'-phosphate is required as a cofactor.

It catalyses the reaction L-2-aminoadipate + 2-oxoglutarate = 2-oxoadipate + L-glutamate. It participates in amino-acid biosynthesis; L-lysine biosynthesis via AAA pathway; L-alpha-aminoadipate from 2-oxoglutarate: step 5/5. Functionally, catalyzes the transfer of an amino group between 2-oxoadipate (2-OA) and glutamate (Glu) to yield alpha-aminodipate (AAA). It can also transaminate glutamate, leucine, and aromatic amino acids. It also contributes in the biosynthesis of other amino acids such as leucine. The protein is 2-aminoadipate transaminase (lysN) of Thermus thermophilus (strain ATCC BAA-163 / DSM 7039 / HB27).